The following is a 156-amino-acid chain: Cytochrome c-type biogenesis protein CcmE 1 (156 aa).

Over 1–8 the chain is Cytoplasmic; it reads MNATRRQR. The helical; Signal-anchor for type II membrane protein transmembrane segment at 9-29 threads the bilayer; the sequence is LWWVICVLTAAALAVTLIVFA. Over 30–156 the chain is Periplasmic; it reads LQRNMSYLFT…ATATPLTAPR (127 aa). Heme is bound by residues His123 and Tyr127. The interval 137 to 156 is disordered; sequence AEGHAGKPIPATATPLTAPR. The span at 146 to 156 shows a compositional bias: low complexity; the sequence is PATATPLTAPR.

Belongs to the CcmE/CycJ family.

Its subcellular location is the cell inner membrane. Heme chaperone required for the biogenesis of c-type cytochromes. Transiently binds heme delivered by CcmC and transfers the heme to apo-cytochromes in a process facilitated by CcmF and CcmH. The protein is Cytochrome c-type biogenesis protein CcmE 1 of Xanthomonas euvesicatoria pv. vesicatoria (strain 85-10) (Xanthomonas campestris pv. vesicatoria).